The primary structure comprises 181 residues: Der GTPase-activating protein YihI (181 aa).

2 disordered regions span residues 1 to 75 (MSRK…KKIP) and 145 to 181 (EPEA…DYKG). Residues 32–43 (RLRKKDKKRKGL) show a composition bias toward basic residues. Residues 146–155 (PEAEEEFEDE) are compositionally biased toward acidic residues. The span at 156–165 (APVRKSRSDD) shows a compositional bias: basic and acidic residues. The segment covering 166–181 (DLLADFEDFDMDDYKG) has biased composition (acidic residues).

The protein belongs to the YihI family. In terms of assembly, interacts with Der.

Its function is as follows. A GTPase-activating protein (GAP) that modifies Der/EngA GTPase function. May play a role in ribosome biogenesis. The polypeptide is Der GTPase-activating protein YihI (Vibrio vulnificus (strain YJ016)).